We begin with the raw amino-acid sequence, 626 residues long: Basic helix-loop-helix ARNT-like protein 1 (626 aa).

The disordered stretch occupies residues 1-60 (MADQRMDISSTISDFMSPGPTDLLSSSLGTSGVDCNRKRKGSSTDYQESMDTDKDDPHGR). Serine 17 is modified (phosphoserine; by GSK3-beta). Low complexity predominate over residues 17 to 32 (SPGPTDLLSSSLGTSG). Position 21 is a phosphothreonine; by GSK3-beta (threonine 21). Residues 36 to 41 (NRKRKG) carry the Nuclear localization signal motif. Residues 51 to 60 (DTDKDDPHGR) are compositionally biased toward basic and acidic residues. The 54-residue stretch at 72-125 (NAREAHSQIEKRRRDKMNSFIDELASLVPTCNAMSRKLDKLTVLRMAVQHMKTL) folds into the bHLH domain. Serine 78 carries the phosphoserine modification. A Phosphoserine; by CK2 modification is found at serine 90. A Nuclear export signal 1 motif is present at residues 142 to 152 (LSDDELKHLIL). Positions 143-215 (SDDELKHLIL…EQLSSSDTAP (73 aa)) constitute a PAS 1 domain. Residue lysine 252 forms a Glycyl lysine isopeptide (Lys-Gly) (interchain with G-Cter in SUMO2 and SUMO3) linkage. Residue lysine 259 forms a Glycyl lysine isopeptide (Lys-Gly) (interchain with G-Cter in SUMO2) linkage. A PAS 2 domain is found at 326–396 (PQPVNGEIRV…ECHRQVLQTR (71 aa)). Positions 361-369 (LAYLPQELL) match the Nuclear export signal 2 motif. The 44-residue stretch at 401–444 (TNCYKFKIKDGSFITLRSRWFSFMNPWTKEVEYIVSTNTVVLAN) folds into the PAC domain. Disordered regions lie at residues 458–493 (ASPH…AGAG) and 511–595 (GSSP…SPSN). A compositionally biased stretch (gly residues) spans 484–493 (IPGGTRAGAG). An interaction with CIART region spans residues 508–588 (RIRGSSPSSC…IGIDMIDNDQ (81 aa)). Over residues 511–521 (GSSPSSCGSSP) the composition is skewed to low complexity. Position 538 is an N6-acetyllysine (lysine 538).

As to quaternary structure, component of the circadian clock oscillator which includes the CRY1/2 proteins, CLOCK or NPAS2,BMAL1 or BMAL2, CSNK1D and/or CSNK1E, TIMELESS and the PER1/2/3 proteins. Forms a heterodimer with CLOCK. The CLOCK-BMAL1 heterodimer is required for E-box-dependent transactivation, for CLOCK nuclear translocation and degradation, and, for phosphorylation of both CLOCK and BMAL1. Part of a nuclear complex which also includes RACK1 and PRKCA; RACK1 and PRKCA are recruited to the complex in a circadian manner. Interacts with NPAS2. Interacts with EZH2. Interacts with SUMO3. Interacts with SIRT1. Interacts with AHR. Interacts with ID1, ID2 and ID3. Interacts with DDX4. Interacts with OGT. Interacts with EED and SUZ12. Interacts with MTA1. Interacts with CIART. Interacts with HSP90. Interacts with KAT2B and EP300. Interacts with BHLHE40/DEC1 and BHLHE41/DEC2. Interacts with RELB and the interaction is enhanced in the presence of CLOCK. Interacts with PER1, PER2, CRY1 and CRY2 and this interaction requires a translocation to the nucleus. Interaction of the CLOCK-BMAL1 heterodimer with PER or CRY inhibits transcription activation. Interaction of the CLOCK-BMAL1 with CRY1 is independent of DNA but with PER2 is off DNA. The CLOCK-BMAL1 heterodimer interacts with GSK3B. Interacts with KDM5A. Interacts with KMT2A; in a circadian manner. Interacts with UBE3A. Interacts with PRKCG. Interacts with MAGEL2. Interacts with NCOA2. Interacts with THRAP3. The CLOCK-BMAL1 heterodimer interacts with PASD1. Interacts with PASD1. Interacts with USP9X. Interacts with PIWIL2 (via PIWI domain). Interacts with HDAC3. Interacts with HNF4A. Post-translationally, ubiquitinated, leading to its proteasomal degradation. Deubiquitinated by USP9X. O-glycosylated; contains O-GlcNAc. O-glycosylation by OGT prevents protein degradation by inhibiting ubiquitination. It also stabilizes the CLOCK-BMAL1 heterodimer thereby increasing CLOCK-BMAL1-mediated transcription of genes in the negative loop of the circadian clock such as PER1/2/3 and CRY1/2. In terms of processing, acetylated on Lys-538 by CLOCK during the repression phase of the circadian cycle. Acetylation facilitates recruitment of CRY1 protein and initiates the repression phase of the circadian cycle. Acetylated at Lys-538 by KAT5 during the activation phase of the cycle, leading to recruitment of the positive transcription elongation factor b (P-TEFb) and BRD4, followed by productive elongation of circadian transcripts. Deacetylated by SIRT1, which may result in decreased protein stability. Post-translationally, phosphorylated upon dimerization with CLOCK. Phosphorylation enhances the transcriptional activity, alters the subcellular localization and decreases the stability of the CLOCK-BMAL1 heterodimer by promoting its degradation. Phosphorylation shows circadian variations in the liver with a peak between CT10 to CT14. Phosphorylation at Ser-90 by CK2 is essential for its nuclear localization, its interaction with CLOCK and controls CLOCK nuclear entry. Dephosphorylation at Ser-78 is important for dimerization with CLOCK and transcriptional activity. Sumoylated on Lys-259 upon dimerization with CLOCK. Predominantly conjugated to poly-SUMO2/3 rather than SUMO1 and the level of these conjugates undergo rhythmic variation, peaking at CT9-CT12. Sumoylation localizes it exclusively to the PML body and promotes its ubiquitination in the PML body, ubiquitin-dependent proteasomal degradation and the transcriptional activity of the CLOCK-BMAL1 heterodimer. In terms of processing, undergoes lysosome-mediated degradation in a time-dependent manner in the liver. In terms of tissue distribution, hair follicles (at protein level). Highly expressed in the adult brain, skeletal muscle and heart.

Its subcellular location is the nucleus. The protein localises to the cytoplasm. It is found in the PML body. There is conflicting data about the effect of NAD cofactors on activity. PubMed:11441146 suggests that the redox state of the cell can modulate the transcriptional activity of the CLOCK-BMAL1 heterodimer; NADH and NADPH enhance the DNA-binding activity of the heterodimer. PubMed:23229515 reports that NADH and NADPH have no significant effect on DNA-binding activity of the CLOCK-BMAL1 heterodimer. In terms of biological role, transcriptional activator which forms a core component of the circadian clock. The circadian clock, an internal time-keeping system, regulates various physiological processes through the generation of approximately 24 hour circadian rhythms in gene expression, which are translated into rhythms in metabolism and behavior. It is derived from the Latin roots 'circa' (about) and 'diem' (day) and acts as an important regulator of a wide array of physiological functions including metabolism, sleep, body temperature, blood pressure, endocrine, immune, cardiovascular, and renal function. Consists of two major components: the central clock, residing in the suprachiasmatic nucleus (SCN) of the brain, and the peripheral clocks that are present in nearly every tissue and organ system. Both the central and peripheral clocks can be reset by environmental cues, also known as Zeitgebers (German for 'timegivers'). The predominant Zeitgeber for the central clock is light, which is sensed by retina and signals directly to the SCN. The central clock entrains the peripheral clocks through neuronal and hormonal signals, body temperature and feeding-related cues, aligning all clocks with the external light/dark cycle. Circadian rhythms allow an organism to achieve temporal homeostasis with its environment at the molecular level by regulating gene expression to create a peak of protein expression once every 24 hours to control when a particular physiological process is most active with respect to the solar day. Transcription and translation of core clock components (CLOCK, NPAS2, BMAL1, BMAL2, PER1, PER2, PER3, CRY1 and CRY2) plays a critical role in rhythm generation, whereas delays imposed by post-translational modifications (PTMs) are important for determining the period (tau) of the rhythms (tau refers to the period of a rhythm and is the length, in time, of one complete cycle). A diurnal rhythm is synchronized with the day/night cycle, while the ultradian and infradian rhythms have a period shorter and longer than 24 hours, respectively. Disruptions in the circadian rhythms contribute to the pathology of cardiovascular diseases, cancer, metabolic syndromes and aging. A transcription/translation feedback loop (TTFL) forms the core of the molecular circadian clock mechanism. Transcription factors, CLOCK or NPAS2 and BMAL1 or BMAL2, form the positive limb of the feedback loop, act in the form of a heterodimer and activate the transcription of core clock genes and clock-controlled genes (involved in key metabolic processes), harboring E-box elements (5'-CACGTG-3') within their promoters. The core clock genes: PER1/2/3 and CRY1/2 which are transcriptional repressors form the negative limb of the feedback loop and interact with the CLOCK|NPAS2-BMAL1|BMAL2 heterodimer inhibiting its activity and thereby negatively regulating their own expression. This heterodimer also activates nuclear receptors NR1D1/2 and RORA/B/G, which form a second feedback loop and which activate and repress BMAL1 transcription, respectively. BMAL1 positively regulates myogenesis and negatively regulates adipogenesis via the transcriptional control of the genes of the canonical Wnt signaling pathway. Plays a role in normal pancreatic beta-cell function; regulates glucose-stimulated insulin secretion via the regulation of antioxidant genes NFE2L2/NRF2 and its targets SESN2, PRDX3, CCLC and CCLM. Negatively regulates the mTORC1 signaling pathway; regulates the expression of MTOR and DEPTOR. Controls diurnal oscillations of Ly6C inflammatory monocytes; rhythmic recruitment of the PRC2 complex imparts diurnal variation to chemokine expression that is necessary to sustain Ly6C monocyte rhythms. Regulates the expression of HSD3B2, STAR, PTGS2, CYP11A1, CYP19A1 and LHCGR in the ovary and also the genes involved in hair growth. Plays an important role in adult hippocampal neurogenesis by regulating the timely entry of neural stem/progenitor cells (NSPCs) into the cell cycle and the number of cell divisions that take place prior to cell-cycle exit. Regulates the circadian expression of CIART and KLF11. The CLOCK-BMAL1 heterodimer regulates the circadian expression of SERPINE1/PAI1, VWF, B3, CCRN4L/NOC, NAMPT, DBP, MYOD1, PPARGC1A, PPARGC1B, SIRT1, GYS2, F7, NGFR, GNRHR, BHLHE40/DEC1, ATF4, MTA1, KLF10 and also genes implicated in glucose and lipid metabolism. Promotes rhythmic chromatin opening, regulating the DNA accessibility of other transcription factors. The NPAS2-BMAL1 heterodimer positively regulates the expression of MAOA, F7 and LDHA and modulates the circadian rhythm of daytime contrast sensitivity by regulating the rhythmic expression of adenylate cyclase type 1 (ADCY1) in the retina. The preferred binding motif for the CLOCK-BMAL1 heterodimer is 5'-CACGTGA-3', which contains a flanking adenine nucleotide at the 3-prime end of the canonical 6-nucleotide E-box sequence. CLOCK specifically binds to the half-site 5'-CAC-3', while BMAL1 binds to the half-site 5'-GTGA-3'. The CLOCK-BMAL1 heterodimer also recognizes the non-canonical E-box motifs 5'-AACGTGA-3' and 5'-CATGTGA-3'. Essential for the rhythmic interaction of CLOCK with ASS1 and plays a critical role in positively regulating CLOCK-mediated acetylation of ASS1. Plays a role in protecting against lethal sepsis by limiting the expression of immune checkpoint protein CD274 in macrophages in a PKM2-dependent manner. Regulates the diurnal rhythms of skeletal muscle metabolism via transcriptional activation of genes promoting triglyceride synthesis (DGAT2) and metabolic efficiency (COQ10B). Its function is as follows. (Microbial infection) Regulates SARS coronavirus-2/SARS-CoV-2 entry and replication in lung epithelial cells probably through the post-transcriptional regulation of ACE2 and interferon-stimulated gene expression. This Homo sapiens (Human) protein is Basic helix-loop-helix ARNT-like protein 1.